The chain runs to 617 residues: Probable endochitinase (617 aa).

One can recognise a GH18 domain in the interval tyrosine 53–valine 426. Cysteine 57 and cysteine 82 are joined by a disulfide. Residues aspartate 109–tryptophan 110 and glycine 136–serine 139 each bind chitin. Glutamate 179 functions as the Proton donor in the catalytic mechanism. Chitin-binding positions include tyrosine 180 and methionine 245–aspartate 248. Asparagine 310 carries N-linked (GlcNAc...) asparagine glycosylation. Residue tryptophan 394 participates in chitin binding. Chitin-binding type-2 domains lie at threonine 478–valine 534 and alanine 563–lysine 617. 2 disulfide bridges follow: cysteine 511-cysteine 524 and cysteine 594-cysteine 607.

This sequence belongs to the glycosyl hydrolase 18 family. Chitinase class II subfamily.

It catalyses the reaction Random endo-hydrolysis of N-acetyl-beta-D-glucosaminide (1-&gt;4)-beta-linkages in chitin and chitodextrins.. The sequence is that of Probable endochitinase (cht-1) from Caenorhabditis elegans.